We begin with the raw amino-acid sequence, 426 residues long: Gamma-glutamylputrescine oxidoreductase (426 aa).

It belongs to the gamma-glutamylputrescine oxidoreductase family.

It carries out the reaction gamma-L-glutamylputrescine + O2 + H2O = 4-(gamma-L-glutamylamino)butanal + H2O2 + NH4(+). It participates in amine and polyamine degradation; putrescine degradation; 4-aminobutanoate from putrescine: step 2/4. Involved in the breakdown of putrescine via the oxidation of L-glutamylputrescine. This chain is Gamma-glutamylputrescine oxidoreductase (puuB), found in Escherichia coli (strain K12).